We begin with the raw amino-acid sequence, 106 residues long: Putative membrane protein insertion efficiency factor (106 aa).

It belongs to the UPF0161 family.

It is found in the cell inner membrane. Could be involved in insertion of integral membrane proteins into the membrane. This chain is Putative membrane protein insertion efficiency factor, found in Methylacidiphilum infernorum (isolate V4) (Methylokorus infernorum (strain V4)).